Reading from the N-terminus, the 252-residue chain is Urease accessory protein UreH (252 aa).

Belongs to the UreD family. In terms of assembly, ureH, UreF and UreG form a complex that acts as a GTP-hydrolysis-dependent molecular chaperone, activating the urease apoprotein by helping to assemble the nickel containing metallocenter of UreC. The UreE protein probably delivers the nickel.

Its subcellular location is the cytoplasm. Its function is as follows. Required for maturation of urease via the functional incorporation of the urease nickel metallocenter. The protein is Urease accessory protein UreH of Helicobacter hepaticus (strain ATCC 51449 / 3B1).